Consider the following 327-residue polypeptide: DNA-directed RNA polymerase subunit alpha (327 aa).

The segment at 1-233 (MVREKVKVST…NLFIPFLHVE (233 aa)) is alpha N-terminal domain (alpha-NTD). An alpha C-terminal domain (alpha-CTD) region spans residues 267-327 (LAFQYIFIDQ…KKILDILEKK (61 aa)).

This sequence belongs to the RNA polymerase alpha chain family. As to quaternary structure, in plastids the minimal PEP RNA polymerase catalytic core is composed of four subunits: alpha, beta, beta', and beta''. When a (nuclear-encoded) sigma factor is associated with the core the holoenzyme is formed, which can initiate transcription.

It is found in the plastid. It localises to the chloroplast. The enzyme catalyses RNA(n) + a ribonucleoside 5'-triphosphate = RNA(n+1) + diphosphate. In terms of biological role, DNA-dependent RNA polymerase catalyzes the transcription of DNA into RNA using the four ribonucleoside triphosphates as substrates. This is DNA-directed RNA polymerase subunit alpha from Crucihimalaya wallichii (Rock-cress).